A 128-amino-acid chain; its full sequence is Cytochrome c-type biogenesis protein CcmE (128 aa).

Residues 1–7 (MKKKHKR) lie on the Cytoplasmic side of the membrane. Residues 8-28 (LLVASGIFFFLNCIVFFILTI) form a helical; Signal-anchor for type II membrane protein membrane-spanning segment. At 29 to 128 (LRENISFFYT…KHDENYMPRK (100 aa)) the chain is on the extracellular side. His-120 and Tyr-124 together coordinate heme.

It belongs to the CcmE/CycJ family.

It localises to the cell membrane. In terms of biological role, heme chaperone required for the biogenesis of c-type cytochromes. Transiently binds heme delivered by CcmC and transfers the heme to apo-cytochromes in a process facilitated by CcmF and CcmH. This Wolbachia sp. subsp. Brugia malayi (strain TRS) protein is Cytochrome c-type biogenesis protein CcmE.